A 587-amino-acid chain; its full sequence is Kelch-like protein 3 (587 aa).

The segment at 1-22 (MDGESIKPSSQPLIQTGDDEKN) is disordered. S10 bears the Phosphoserine mark. The BTB domain maps to 50 to 117 (CDVMIVAEDV…IYTAEIEVTE (68 aa)). Residues 152–254 (CLGIRAFADV…PRDYLVQTVE (103 aa)) enclose the BACK domain. T295 is subject to Phosphothreonine. Kelch repeat units lie at residues 302 to 347 (VMIV…FMAG), 348 to 394 (HVYA…VLND), 396 to 441 (LYAV…VVEG), 442 to 490 (KLYA…VLSG), 491 to 537 (QLYA…AVNG), and 539 to 585 (LYVV…VIHK). T375 carries the phosphothreonine modification. Phosphoserine is present on residues S376 and S433.

It belongs to the KLHL3 family. Homodimer. Component of the BCR(KLHL3) E3 ubiquitin ligase complex, at least composed of CUL3 and KLHL3 and RBX1. Interacts with CLDN8. Post-translationally, phosphorylation at Ser-433 by PKA or PKC decreases the interaction with WNK1 and WNK4, leading to inhibit their degradation by the BCR(KLHL3) complex. Phosphorylated at Ser-433 by PKC in response to angiotensin II signaling, decreasing ability to promote degradation of WNK1 and WNK4, leading to activation of Na-Cl cotransporter SLC12A3/NCC. Phosphorylation at Ser-433 is increased by insulin. Dephosphorylated at Ser-433 by calcineurin PPP3CA, promoting degradation of WNK1 and WNK4.

It is found in the cytoplasm. The protein localises to the cytoskeleton. It localises to the cytosol. It participates in protein modification; protein ubiquitination. Substrate-specific adapter of a BCR (BTB-CUL3-RBX1) E3 ubiquitin ligase complex that acts as a regulator of ion transport in the distal nephron. The BCR(KLHL3) complex acts by mediating ubiquitination and degradation of WNK1 and WNK4, two activators of Na-Cl cotransporter SLC12A3/NCC in distal convoluted tubule cells of kidney, thereby regulating NaCl reabsorption. The BCR(KLHL3) complex also mediates ubiquitination and degradation of WNK3. The BCR(KLHL3) complex also mediates ubiquitination of CLDN8, a tight-junction protein required for paracellular chloride transport in the kidney, leading to its degradation. The sequence is that of Kelch-like protein 3 (KLHL3) from Bos taurus (Bovine).